The sequence spans 111 residues: Putative membrane protein insertion efficiency factor (111 aa).

This sequence belongs to the UPF0161 family.

The protein resides in the cell inner membrane. Could be involved in insertion of integral membrane proteins into the membrane. In Methylobacterium nodulans (strain LMG 21967 / CNCM I-2342 / ORS 2060), this protein is Putative membrane protein insertion efficiency factor.